We begin with the raw amino-acid sequence, 328 residues long: Probable transcription factor At4g00610 (328 aa).

A disordered region spans residues 31–143; it reads AKNKTLVTPS…ERAKTETETG (113 aa). The span at 35 to 54 shows a compositional bias: polar residues; it reads TLVTPSTVKKSSDVASTSKK. The span at 84–108 shows a compositional bias: acidic residues; it reads SEEEEEDEPSSDSESGSESESDTEA. The segment covering 122-143 has biased composition (basic and acidic residues); that stretch reads NEKRQSEGKPEEERAKTETETG.

It belongs to the GeBP family.

The protein is Probable transcription factor At4g00610 of Arabidopsis thaliana (Mouse-ear cress).